Here is a 197-residue protein sequence, read N- to C-terminus: Fucoxanthin-chlorophyll a-c binding protein E, chloroplastic (197 aa).

The transit peptide at M1 to M31 directs the protein to the chloroplast. 3 consecutive transmembrane segments (helical) span residues I73–I94, I114–M134, and G174–P196.

It belongs to the fucoxanthin chlorophyll protein family. The LHC complex of chromophytic algae is composed of fucoxanthin, chlorophyll A and C bound non-covalently by fucoxanthin chlorophyll proteins (FCPs). The ratio of the pigments in LHC; fucoxanthin: chlorophyll C: chlorophyll A; (0.6-1): (0.1-0.3): (1).

The protein localises to the plastid. It is found in the chloroplast thylakoid membrane. The light-harvesting complex (LHC) functions as a light receptor, it captures and delivers excitation energy to photosystems with which it is closely associated. Energy is transferred from the carotenoid and chlorophyll C (or B) to chlorophyll A and the photosynthetic reaction centers where it is used to synthesize ATP and reducing power. In Phaeodactylum tricornutum (Diatom), this protein is Fucoxanthin-chlorophyll a-c binding protein E, chloroplastic (FCPE).